A 336-amino-acid polypeptide reads, in one-letter code: Mitochondrial import receptor subunit TOM40 homolog (336 aa).

Residues 1 to 58 (MGNVLAASSPAPPAAGSPPAPGLVSVPPGFTMPPVAGLTPTPDKKETQEDRLPNPGTF) are disordered. The span at 10–21 (PAPPAAGSPPAP) shows a compositional bias: pro residues. A compositionally biased stretch (basic and acidic residues) spans 42–52 (PDKKETQEDRL).

It belongs to the Tom40 family. In terms of assembly, forms part of the preprotein translocase complex of the outer mitochondrial membrane (TOM complex). Interacts with mitochondrial targeting sequences.

It is found in the mitochondrion outer membrane. Channel-forming protein essential for import of protein precursors into mitochondria. The sequence is that of Mitochondrial import receptor subunit TOM40 homolog (tomm40) from Xenopus tropicalis (Western clawed frog).